Reading from the N-terminus, the 496-residue chain is COP9 signalosome complex subunit 3 (496 aa).

Residues 243–411 (QASHCLGIVI…GNETTTMLRF (169 aa)) enclose the PCI domain. The tract at residues 468–496 (GSSERSGVVGSTEADGGGDLDEDLMGDGR) is disordered. Over residues 483–496 (GGGDLDEDLMGDGR) the composition is skewed to acidic residues.

This sequence belongs to the CSN3 family. As to quaternary structure, component of the COP9 signalosome (CSN) complex.

It localises to the cytoplasm. It is found in the nucleus. In terms of biological role, component of the COP9 signalosome (CSN) complex that acts as an regulator of the ubiquitin (Ubl) conjugation pathway by mediating the deneddylation of the cullin subunit of SCF-type E3 ubiquitin-protein ligase complexes. The CSN complex seems to link protein degradation to sexual development. The sequence is that of COP9 signalosome complex subunit 3 (csnC) from Emericella nidulans (strain FGSC A4 / ATCC 38163 / CBS 112.46 / NRRL 194 / M139) (Aspergillus nidulans).